Here is a 409-residue protein sequence, read N- to C-terminus: Putative competence-damage inducible protein (409 aa).

It belongs to the CinA family.

This Clostridium botulinum (strain Kyoto / Type A2) protein is Putative competence-damage inducible protein.